Consider the following 330-residue polypeptide: G-protein coupled receptor 157 (330 aa).

The Extracellular portion of the chain corresponds to 1 to 15 (MPTPAPPTELLPWER). A helical transmembrane segment spans residues 16–36 (AVVLLSCVLSALGSGLLVATH). The Cytoplasmic portion of the chain corresponds to 37–48 (ALWPDLRSRARR). Residues 49 to 69 (LLLFLSLADLLSAASYFYGVL) form a helical membrane-spanning segment. At 70–87 (QDFAGTSWDCVLQGALST) the chain is on the extracellular side. A helical transmembrane segment spans residues 88–108 (FANTSSFFWTVAIALYLYLNI). Residues 109 to 119 (VRATRGPCTDH) are Cytoplasmic-facing. Residues 120 to 140 (LVWAFHLISWGVPLAITVAAV) traverse the membrane as a helical segment. Residues 141-166 (CLKKIGYDASDVSVGWCWINLEAEDR) are Extracellular-facing. The helical transmembrane segment at 167-187 (VLWMLLTGKLWEMLAYILLPL) threads the bilayer. Over 188–227 (LYLLVRKHINRAHQALSEYRPIWEGRQLQRGSPTSMADKK) the chain is Cytoplasmic. A helical membrane pass occupies residues 228–250 (LILIPFIFICLRVWSTVRFVLTL). Residues 251–259 (CGSPVVQAP) are Extracellular-facing. A helical transmembrane segment spans residues 260–282 (VLVVLHGIGNTFQGGANCIMFVL). Residues 283-330 (CTRAVRTRLFSLCCCYPRPPTQNPPGASIPPKMGESQESRRTPEVPST) lie on the Cytoplasmic side of the membrane. Positions 303–330 (TQNPPGASIPPKMGESQESRRTPEVPST) are disordered. Basic and acidic residues predominate over residues 317–330 (ESQESRRTPEVPST).

This sequence belongs to the G-protein coupled receptor 2 family.

It is found in the cell projection. Its subcellular location is the cilium membrane. Functionally, orphan receptor that promotes neuronal differentiation of radial glial progenitors (RGPs). The activity of this receptor is mediated by a G(q)-protein that activates a phosphatidylinositol-calcium second messenger. This is G-protein coupled receptor 157 (Gpr157) from Rattus norvegicus (Rat).